We begin with the raw amino-acid sequence, 131 residues long: Small ribosomal subunit protein bS6 (131 aa).

Residues 96–131 (VTEASPMAKAKDERDSRRGPAGDRSYDEANAEEIAE) form a disordered region. The span at 104 to 122 (KAKDERDSRRGPAGDRSYD) shows a compositional bias: basic and acidic residues.

The protein belongs to the bacterial ribosomal protein bS6 family.

In terms of biological role, binds together with bS18 to 16S ribosomal RNA. The chain is Small ribosomal subunit protein bS6 from Shewanella sp. (strain ANA-3).